The primary structure comprises 163 residues: MKIGVYAGSFDPITKGHQDIIERALKIVDKLIVVVMNNPTKNYWFNLDERKNLISKIFEGSDSIKVDEHAGLLVDFMAKNSCNILIKGLRDVKDFSEEMTYSFANKKLSNGEVDTIFIPTSEKYTYVSSTFVKELAFYNQSLTGYVDDKVIVDILNRAKEYRG.

Serine 9 provides a ligand contact to substrate. ATP-binding positions include 9 to 10 (SF) and histidine 17. The substrate site is built by lysine 41, leucine 73, and lysine 87. ATP-binding positions include 88-90 (GLR), glutamate 98, and 124-130 (YTYVSST).

This sequence belongs to the bacterial CoaD family. As to quaternary structure, homohexamer. The cofactor is Mg(2+).

The protein resides in the cytoplasm. The catalysed reaction is (R)-4'-phosphopantetheine + ATP + H(+) = 3'-dephospho-CoA + diphosphate. Its pathway is cofactor biosynthesis; coenzyme A biosynthesis; CoA from (R)-pantothenate: step 4/5. Functionally, reversibly transfers an adenylyl group from ATP to 4'-phosphopantetheine, yielding dephospho-CoA (dPCoA) and pyrophosphate. This Fusobacterium nucleatum subsp. nucleatum (strain ATCC 25586 / DSM 15643 / BCRC 10681 / CIP 101130 / JCM 8532 / KCTC 2640 / LMG 13131 / VPI 4355) protein is Phosphopantetheine adenylyltransferase.